The chain runs to 615 residues: Medium-chain acyl-CoA ligase ACSF2, mitochondrial (615 aa).

The transit peptide at 1 to 41 (MAVYVGMLRLGRLCAGSSGVLGARAALSRSWQEARLQGVRF) directs the protein to the mitochondrion. At Lys-179 the chain carries N6-acetyllysine. Residue Lys-182 is modified to N6-acetyllysine; alternate. Lys-182 carries the post-translational modification N6-succinyllysine; alternate. 263-271 (TSGTTGSPK) lines the ATP pocket. Lys-340 and Lys-398 each carry N6-acetyllysine. Position 478 is an N6-succinyllysine (Lys-478). Asp-493 and Arg-508 together coordinate ATP. An N6-acetyllysine modification is found at Lys-510. 2 positions are modified to N6-acetyllysine; alternate: Lys-544 and Lys-570. An N6-succinyllysine; alternate mark is found at Lys-544 and Lys-570. Residue Lys-599 participates in ATP binding. Lys-599 carries the N6-succinyllysine modification.

It belongs to the ATP-dependent AMP-binding enzyme family.

The protein localises to the mitochondrion. The catalysed reaction is a medium-chain fatty acid + ATP + CoA = a medium-chain fatty acyl-CoA + AMP + diphosphate. The enzyme catalyses octanoate + ATP + CoA = octanoyl-CoA + AMP + diphosphate. In terms of biological role, acyl-CoA synthases catalyze the initial reaction in fatty acid metabolism, by forming a thioester with CoA. Has some preference toward medium-chain substrates. Plays a role in adipocyte differentiation. The polypeptide is Medium-chain acyl-CoA ligase ACSF2, mitochondrial (Homo sapiens (Human)).